The chain runs to 321 residues: YIDGDEGILLYHGYSIDQLAENGDFLETCYLLLYGELPNKQQKIDFDRCIMRHTMVHEQFARFFHGFRRDSHPMAVMVACLGAMSAFYHDSINITDPQQRMIASIRLISKVPTLAAMAYKYSIGQPFVYPRNDLNYATNFLHMCFSVPCEEHKISPVIARAMDRIFTLHADHEQNASTSTVRLAGSSGANPYACIAAGVACLWGPAHGGANEACLKMLQEIGSVKKIPEFIARAKDKNDPFRLMGFGHRVYKNYDPRAKIMQKTCHEVLQELNIQDDPLLDIAMELEHIALNDEYFINKKLYPNVDFYSGITLKALGFPTE.

Residues histidine 248 and aspartate 306 contribute to the active site.

The protein belongs to the citrate synthase family.

The enzyme catalyses oxaloacetate + acetyl-CoA + H2O = citrate + CoA + H(+). It participates in carbohydrate metabolism; tricarboxylic acid cycle; isocitrate from oxaloacetate: step 1/2. This is Citrate synthase (gltA) from Bartonella bacilliformis.